Reading from the N-terminus, the 163-residue chain is Superoxide dismutase [Mn] (163 aa).

Mn(2+)-binding residues include H2, H50, D134, and H138.

The protein belongs to the iron/manganese superoxide dismutase family. It depends on Mn(2+) as a cofactor.

The enzyme catalyses 2 superoxide + 2 H(+) = H2O2 + O2. Its function is as follows. Destroys superoxide anion radicals which are normally produced within the cells and which are toxic to biological systems. This is Superoxide dismutase [Mn] (sodA) from Mycobacterium scrofulaceum.